Here is a 180-residue protein sequence, read N- to C-terminus: ATP-dependent protease subunit HslV (180 aa).

T5 is an active-site residue. Residues G161, C164, and T167 each contribute to the Na(+) site.

It belongs to the peptidase T1B family. HslV subfamily. As to quaternary structure, a double ring-shaped homohexamer of HslV is capped on each side by a ring-shaped HslU homohexamer. The assembly of the HslU/HslV complex is dependent on binding of ATP.

The protein resides in the cytoplasm. It catalyses the reaction ATP-dependent cleavage of peptide bonds with broad specificity.. With respect to regulation, allosterically activated by HslU binding. Functionally, protease subunit of a proteasome-like degradation complex believed to be a general protein degrading machinery. This Campylobacter jejuni subsp. jejuni serotype O:6 (strain 81116 / NCTC 11828) protein is ATP-dependent protease subunit HslV.